The sequence spans 344 residues: Arginine N-succinyltransferase (344 aa).

L125 is a binding site for succinyl-CoA. H229 acts as the Proton donor in catalysis.

This sequence belongs to the arginine N-succinyltransferase family.

The enzyme catalyses succinyl-CoA + L-arginine = N(2)-succinyl-L-arginine + CoA + H(+). It participates in amino-acid degradation; L-arginine degradation via AST pathway; L-glutamate and succinate from L-arginine: step 1/5. In terms of biological role, catalyzes the transfer of succinyl-CoA to arginine to produce N(2)-succinylarginine. The chain is Arginine N-succinyltransferase from Salmonella typhi.